Reading from the N-terminus, the 84-residue chain is DNA-directed RNA polymerase subunit Rpo5 (84 aa).

Belongs to the archaeal Rpo5/eukaryotic RPB5 RNA polymerase subunit family. In terms of assembly, part of the RNA polymerase complex.

The protein localises to the cytoplasm. The enzyme catalyses RNA(n) + a ribonucleoside 5'-triphosphate = RNA(n+1) + diphosphate. Functionally, DNA-dependent RNA polymerase (RNAP) catalyzes the transcription of DNA into RNA using the four ribonucleoside triphosphates as substrates. This Saccharolobus islandicus (strain Y.N.15.51 / Yellowstone #2) (Sulfolobus islandicus) protein is DNA-directed RNA polymerase subunit Rpo5.